A 2671-amino-acid chain; its full sequence is Inositol 1,4,5-trisphosphate-gated calcium channel ITPR3 (2671 aa).

Residues 1 to 2202 (MSEMSSFLHI…LIYWFSRRMT (2202 aa)) are Cytoplasmic-facing. MIR domains lie at 113–173 (GDVV…LRSN), 174–224 (GDNV…INLF), 232–288 (EEVL…VEVV), 295–372 (GGAG…LDPT), and 378–434 (DSFV…IVSV). 1D-myo-inositol 1,4,5-trisphosphate contacts are provided by Arg266, Thr268, Leu269, and Arg270. The tract at residues 322-342 (SYKGDASDPKAAGMGAQGRTG) is disordered. Residues Arg503, Lys507, Arg510, Tyr567, Arg568, and Lys569 each contribute to the 1D-myo-inositol 1,4,5-trisphosphate site. Arg743 serves as a coordination point for Ca(2+). Phosphoserine occurs at positions 916 and 934. Residues Glu1122 and Glu1125 each coordinate Ca(2+). Disordered regions lie at residues 1132–1163 (GSGK…PPGE) and 1809–1848 (NDLG…GPSL). Phosphoserine occurs at positions 1813, 1832, and 1834. Glu1882 and Glu1946 together coordinate Ca(2+). ATP contacts are provided by Ala1996, Glu2149, and Lys2152. The helical transmembrane segment at 2203–2223 (LWGSISFNLAVFINIIIAFFY) threads the bilayer. Residues 2224-2235 (PYMEGASTGVLD) are Extracellular-facing. A helical transmembrane segment spans residues 2236 to 2256 (SPLISLLFWILICFSIAALFT). The Cytoplasmic segment spans residues 2257 to 2264 (KRYSIRPL). The helical transmembrane segment at 2265–2285 (IVALILRSIYYLGIGPTLNIL) threads the bilayer. The Extracellular segment spans residues 2286–2325 (GALNLTNKIVFVVSFVGNRGTFIRGYKAMVMDMEFLYHVG). The helical transmembrane segment at 2326–2346 (YILTSVLGLFAHELFYSILLF) threads the bilayer. The Cytoplasmic portion of the chain corresponds to 2347–2368 (DLIYREETLFNVIKSVTRNGRS). A helical transmembrane segment spans residues 2369–2389 (ILLTALLALILVYLFSIVGFL). The Extracellular segment spans residues 2390 to 2496 (FLKDDFILEV…ESLFPARVVY (107 aa)). Cys2455 and Cys2461 are oxidised to a cystine. A helical membrane pass occupies residues 2497 to 2517 (DLLFFFIVIIIVLNLIFGVII). The Cytoplasmic segment spans residues 2518 to 2671 (DTFADLRSEK…FVDVQNCISR (154 aa)). 2 residues coordinate ATP: Cys2538 and Phe2539. Cys2538 serves as a coordination point for Zn(2+). The Zn(2+) site is built by Cys2541 and His2558. Positions 2560, 2563, 2564, and 2565 each coordinate ATP. Position 2563 (His2563) interacts with Zn(2+). Thr2581 serves as a coordination point for Ca(2+). Phosphoserine occurs at positions 2609 and 2670.

It belongs to the InsP3 receptor family. In terms of assembly, homotetramer. Homodimer. Interacts with TRPC1, TRPC3 and TRPC4. Interacts with TRPV4. Interacts with SIGMAR1. Interacts with PML and AKT1. Interacts with IRAG2 (via coiled-coil domain). Interacts with CABP1. Interacts with TMBIM4/LFG4. Interacts with CEMIP. Interacts with TESPA1. Interacts with TMEM203. Interacts with BOK; regulates ITPR3 expression. Interacts with BCL2L10. Interacts with CHGA and CHGB. Phosphorylated by AKT1 on serine and/or threonine residues. As to expression, expressed in intestinal crypt and villus epithelial cells.

Its subcellular location is the endoplasmic reticulum membrane. It is found in the cytoplasmic vesicle. The protein resides in the secretory vesicle membrane. It carries out the reaction Ca(2+)(in) = Ca(2+)(out). With respect to regulation, inositol 1,4,5-trisphosphate-gated calcium channel is regulated by cytosolic calcium in a biphasic manner. At low concentrations, cytosolic calcium binds at a high-affinity juxtamembrane domain (JD) calcium binding site, allowing ITPR3 to activate by escaping a low-energy resting state through an ensemble of preactivated states. At high cytosolic calcium concentrations, ITPR3 preferentially enters an inhibited state stabilized by calcium binding at a second, low-affinity cytoplasmic domain (CD) calcium binding site. Functionally, inositol 1,4,5-trisphosphate-gated calcium channel that, upon 1D-myo-inositol 1,4,5-trisphosphate binding, transports calcium from the endoplasmic reticulum lumen to cytoplasm, thus releasing the intracellular calcium and therefore participates in cellular calcium ion homeostasis. 1D-myo-inositol 1,4,5-trisphosphate binds to the ligand-free channel without altering its global conformation, yielding the low-energy resting state, then progresses through resting-to preactivated transitions to the higher energy preactivated state, which increases affinity for calcium, promoting binding of the low basal cytosolic calcium at the juxtamembrane domain (JD) site, favoring the transition through the ensemble of high-energy intermediate states along the trajectory to the fully-open activated state. Upon opening, releases calcium in the cytosol where it can bind to the low-affinity cytoplasmic domain (CD) site and stabilizes the inhibited state to terminate calcium release. In Homo sapiens (Human), this protein is Inositol 1,4,5-trisphosphate-gated calcium channel ITPR3.